The following is a 101-amino-acid chain: Protein S100-A4 (101 aa).

At Lys-7 the chain carries N6-acetyllysine. EF-hand domains lie at 12–47 and 50–85; these read MVST…SFLG and TDEA…VAMM. Ca(2+) is bound by residues Lys-28 and Glu-33. Lys-35 carries the post-translational modification N6-acetyllysine. Residues Asp-63, Asn-65, Asp-67, Glu-69, and Glu-74 each coordinate Ca(2+).

It belongs to the S-100 family. Homodimer. Interacts with PPFIBP1 in a calcium-dependent mode. Interacts with PGLYRP1; this complex acts as a chemoattractant that promotes lymphocyte movement. Interacts with MYH9; this interaction increases cell motility. Interacts with Annexin 2/ANXA2. Interacts with TP53; this interaction promotes TP53 degradation. Interacts with CCR5 and CXCR3. Interacts with FCGR3A; this interaction inhibits PKC-dependent phosphorylation of FCGR3A.

It is found in the secreted. It localises to the nucleus. The protein resides in the cytoplasm. Its function is as follows. Calcium-binding protein that plays a role in various cellular processes including motility, angiogenesis, cell differentiation, apoptosis, and autophagy. Increases cell motility and invasiveness by interacting with non-muscle myosin heavy chain (NMMHC) IIA/MYH9. Mechanistically, promotes filament depolymerization and increases the amount of soluble myosin-IIA, resulting in the formation of stable protrusions facilitating chemotaxis. Also modulates the pro-apoptotic function of TP53 by binding to its C-terminal transactivation domain within the nucleus and reducing its protein levels. Within the extracellular space, stimulates cytokine production including granulocyte colony-stimulating factor and CCL24 from T-lymphocytes. In addition, stimulates T-lymphocyte chemotaxis by acting as a chemoattractant complex with PGLYRP1 that promotes lymphocyte migration via CCR5 and CXCR3 receptors. The sequence is that of Protein S100-A4 (S100A4) from Canis lupus familiaris (Dog).